A 251-amino-acid chain; its full sequence is Flap endonuclease Xni (251 aa).

Asp104 lines the Mg(2+) pocket. Residues 160 to 250 (VLPRQLPDYW…SGNLQQLRLK (91 aa)) enclose the 5'-3' exonuclease domain. K(+) is bound by residues Leu171, Ala172, Pro180, Val182, and Val185. The interaction with DNA stretch occupies residues 184–189 (GVGAKT).

It belongs to the Xni family. Mg(2+) is required as a cofactor. Requires K(+) as cofactor.

Its function is as follows. Has flap endonuclease activity. During DNA replication, flap endonucleases cleave the 5'-overhanging flap structure that is generated by displacement synthesis when DNA polymerase encounters the 5'-end of a downstream Okazaki fragment. The chain is Flap endonuclease Xni from Yersinia pestis bv. Antiqua (strain Nepal516).